Consider the following 80-residue polypeptide: Large ribosomal subunit protein bL31 (80 aa).

Zn(2+) is bound by residues C16, C18, C38, and C41.

Belongs to the bacterial ribosomal protein bL31 family. Type A subfamily. Part of the 50S ribosomal subunit. It depends on Zn(2+) as a cofactor.

In terms of biological role, binds the 23S rRNA. In Mycobacterium avium (strain 104), this protein is Large ribosomal subunit protein bL31.